A 1344-amino-acid chain; its full sequence is Regulatory-associated protein of TOR 1 (1344 aa).

A compositionally biased stretch (basic and acidic residues) spans 28–44 (CVSSHDDGDSRRKDSEA). 2 disordered regions span residues 28–56 (CVSSHDDGDSRRKDSEAKSSSSYGNGTTE) and 771–818 (ASTD…DSVS). Over residues 785–816 (SSSPLGSSGLMQGSPLSDDSSLHSDSGMMHDS) the composition is skewed to low complexity. WD repeat units lie at residues 1025–1064 (RFETGTKTALLHPFSPIVVAADENERIRVWNYEEATLLNG), 1070–1111 (FPDK…GKQK), 1125–1164 (GARDLNAVVDWQQQSGYLYASGETSTVTLWDLEKEQLVRS), 1168–1208 (ESEC…PLVC), 1214–1255 (QKVE…DTYL), 1259–1298 (AHRGSLTALAVHRHAPIIASGSAKQLIKVFSLQGEQLGII), and 1307–1344 (QKIGSVSCLTFHPYQVLLAAGAADSFVSIYTHDNSQAR).

It belongs to the WD repeat RAPTOR family. As to quaternary structure, interacts with TOR, ATPK1 and ML1. Interacts with KIN10. Phosphorylated by KIN10. As to expression, expressed in roots, leaves, flowers and seeds.

It is found in the cytoplasm. In terms of biological role, probable component of the plant TOR kinase pathway that recruits substrates for TOR. Modulates plant cell growth and regulates the activity of ATPK1 kinase in response to osmotic stress. This is Regulatory-associated protein of TOR 1 (RAPTOR1) from Arabidopsis thaliana (Mouse-ear cress).